Reading from the N-terminus, the 611-residue chain is Solute carrier family 23 member 3 (611 aa).

The Cytoplasmic portion of the chain corresponds to 1 to 52 (MSRSPLHPIPLLSEGYQDTPAPLPPLLPPLQNPSSRSWASRVFGPSTWGLSC). A helical membrane pass occupies residues 53 to 73 (LLALQHFLVLASLLWASHLLL). Topologically, residues 74-88 (LHGLPPGGLSYPPAQ) are extracellular. Residues 89 to 109 (LLASSFFSCGLSTVLQTWMGS) traverse the membrane as a helical segment. The Cytoplasmic portion of the chain corresponds to 110–168 (RLPLIQAPSLEFLIPALVLTNQKLPLTTKTPGNASLSLPLCSLTRSCHGLELWNTSLRE). Residues 169–189 (VSGAVVVSGLLQGTIGLLGVP) form a helical membrane-spanning segment. Over 190–191 (GR) the chain is Extracellular. A helical transmembrane segment spans residues 192-212 (VFPYCGPLVLAPSLVVAGLSA). The Cytoplasmic segment spans residues 213–215 (HKE). Residues 216–236 (VAQFCSAHWGLALLLILLMVV) form a helical membrane-spanning segment. Residues 237 to 269 (CSQHLGSCQIPLCSWRPSSTSTHICIPVFRLLS) lie on the Extracellular side of the membrane. The helical transmembrane segment at 270–290 (VLAPVACVWFISAFVGTSVIP) threads the bilayer. The Cytoplasmic portion of the chain corresponds to 291–319 (LQLSEPSDAPWFWLPHPGEWEWPLLTPRA). A helical membrane pass occupies residues 320 to 340 (LAAGISMALAASTSSLGCYAL). Residues 341-358 (CGQLLRLSPPPPHACSRG) lie on the Extracellular side of the membrane. Residues 359–379 (LSLEGLGSVLAGLLGSPLGTA) form a helical membrane-spanning segment. The Cytoplasmic segment spans residues 380–397 (SSFPNVGTVSLFQTGSRR). A helical membrane pass occupies residues 398 to 417 (VAHLVGLFCMGLGLSPRLAQ). Over 418 to 426 (LFTSIPLPV) the chain is Extracellular. The chain crosses the membrane as a helical span at residues 427-449 (LGGVLGVTQAVVLSAGFSSFHLA). The Cytoplasmic portion of the chain corresponds to 450–455 (DIDSGR). Residues 456–475 (NVFIVGFSIFMALLLPRWLR) traverse the membrane as a helical segment. Residues 476 to 489 (EAPVLLNTGWSPLD) are Extracellular-facing. The helical transmembrane segment at 490 to 510 (MFLRSLLAEPIFLAGLLGFLL) threads the bilayer. The Cytoplasmic portion of the chain corresponds to 511 to 611 (ENTISGTRAE…TASREGVRSQ (101 aa)). The segment at 574–611 (PEDSGDEGGSSKTGERADLLPNSGESYSTASREGVRSQ) is disordered. The segment covering 596 to 605 (SGESYSTASR) has biased composition (polar residues).

Belongs to the nucleobase:cation symporter-2 (NCS2) (TC 2.A.40) family.

The protein localises to the membrane. Its subcellular location is the cytoplasm. It carries out the reaction hypoxanthine(out) + Na(+)(out) = hypoxanthine(in) + Na(+)(in). In terms of biological role, acts as a sodium-dependent hypoxanthine transporter. May show xanthine-hypoxanthine exchange activity. This chain is Solute carrier family 23 member 3 (Slc23a3), found in Mus musculus (Mouse).